Reading from the N-terminus, the 452-residue chain is UPF0210 protein Daud_1353 (452 aa).

Belongs to the UPF0210 family. Homodimer.

The chain is UPF0210 protein Daud_1353 from Desulforudis audaxviator (strain MP104C).